The sequence spans 224 residues: MARRPGSSSRGPARPDRLAPQAVTSARRPQTPDKSPKPASPDPSLVLLGEFGRPHGLHGEVRLKSFTGEPLAIAGYGPLHASDGRTLELEDARPAPGGSPDLLIVRVKGVDNRSGAEALNRITLAIARERLGQAEDEDEFFLTDLIGLAVEDPSGTVIGTIVAVPNYGGGDLLEIRPAAGGPTALLPFTKAFVPTLDLAGGKVVADPPEDLFAPPGPKPADDPG.

The segment covering 1-12 (MARRPGSSSRGP) has biased composition (low complexity). 2 disordered regions span residues 1–46 (MARR…PSLV) and 204–224 (VADP…DDPG). Residues 137 to 211 (EDEFFLTDLI…KVVADPPEDL (75 aa)) enclose the PRC barrel domain.

This sequence belongs to the RimM family. Binds ribosomal protein uS19.

It is found in the cytoplasm. In terms of biological role, an accessory protein needed during the final step in the assembly of 30S ribosomal subunit, possibly for assembly of the head region. Essential for efficient processing of 16S rRNA. May be needed both before and after RbfA during the maturation of 16S rRNA. It has affinity for free ribosomal 30S subunits but not for 70S ribosomes. This chain is Ribosome maturation factor RimM, found in Methylorubrum populi (strain ATCC BAA-705 / NCIMB 13946 / BJ001) (Methylobacterium populi).